Here is a 60-residue protein sequence, read N- to C-terminus: Large ribosomal subunit protein uL30 (60 aa).

Belongs to the universal ribosomal protein uL30 family. As to quaternary structure, part of the 50S ribosomal subunit.

This is Large ribosomal subunit protein uL30 from Shewanella woodyi (strain ATCC 51908 / MS32).